The following is a 233-amino-acid chain: Low affinity immunoglobulin gamma Fc region receptor III-B (233 aa).

A signal peptide spans 1 to 16 (MWQLLLPTALLLLVSA). Ig-like C2-type domains lie at 40–96 (KDSV…LSTL) and 121–179 (EDPI…VGSK). The cysteines at positions 47 and 89 are disulfide-linked. N-linked (GlcNAc...) asparagine glycans are attached at residues Asn-56, Asn-63, Asn-82, and Asn-92. A disulfide bond links Cys-128 and Cys-172. Residues Asn-180 and Asn-187 are each glycosylated (N-linked (GlcNAc...) asparagine). A lipid anchor (GPI-anchor amidated serine) is attached at Ser-200. Positions 201 to 233 (SFSPPGYQVSFCLVMVLLFAVDTGLYFSVKTNI) are cleaved as a propeptide — removed in mature form.

As to quaternary structure, monomer. Interacts with INPP5D/SHIP1. In terms of processing, glycosylated. Glycosylation plays an inhibitory role in the interaction with IgG3. Post-translationally, the soluble form is produced by a proteolytic cleavage. As to expression, expressed specifically by polymorphonuclear leukocytes (neutrophils). Also expressed by stimulated eosinophils.

The protein resides in the cell membrane. It is found in the secreted. Its function is as follows. Receptor for the Fc region of immunoglobulins gamma. Low affinity receptor. Binds complexed or aggregated IgG and also monomeric IgG. Contrary to III-A, is not capable to mediate antibody-dependent cytotoxicity and phagocytosis. May serve as a trap for immune complexes in the peripheral circulation which does not activate neutrophils. In Homo sapiens (Human), this protein is Low affinity immunoglobulin gamma Fc region receptor III-B (FCGR3B).